A 109-amino-acid polypeptide reads, in one-letter code: Cell division protein ZapA (109 aa).

Positions 21–99 (PEQLDALNQA…IEQALLEQGR (79 aa)) form a coiled coil.

It belongs to the ZapA family. Type 1 subfamily. As to quaternary structure, homodimer. Interacts with FtsZ.

Its subcellular location is the cytoplasm. Functionally, activator of cell division through the inhibition of FtsZ GTPase activity, therefore promoting FtsZ assembly into bundles of protofilaments necessary for the formation of the division Z ring. It is recruited early at mid-cell but it is not essential for cell division. In Edwardsiella ictaluri (strain 93-146), this protein is Cell division protein ZapA.